We begin with the raw amino-acid sequence, 67 residues long: MKVNDLVTVKTDGKTRREGTILAVETFQEGIMYLVALKDYPAGIWFFNEADSKDGTFVEPKTLPDEE.

This sequence belongs to the DsrB family.

The protein is Protein DsrB of Pectobacterium carotovorum subsp. carotovorum (strain PC1).